A 301-amino-acid polypeptide reads, in one-letter code: UDP-N-acetylenolpyruvoylglucosamine reductase (301 aa).

The region spanning 26–193 (KTGGPAQYLA…VSATFGLEPG (168 aa)) is the FAD-binding PCMH-type domain. Residue Arg172 is part of the active site. The active-site Proton donor is Ser222. The active site involves Glu292.

It belongs to the MurB family. FAD is required as a cofactor.

It localises to the cytoplasm. It carries out the reaction UDP-N-acetyl-alpha-D-muramate + NADP(+) = UDP-N-acetyl-3-O-(1-carboxyvinyl)-alpha-D-glucosamine + NADPH + H(+). It functions in the pathway cell wall biogenesis; peptidoglycan biosynthesis. Its function is as follows. Cell wall formation. This Lactobacillus johnsonii (strain CNCM I-12250 / La1 / NCC 533) protein is UDP-N-acetylenolpyruvoylglucosamine reductase.